Here is a 325-residue protein sequence, read N- to C-terminus: mRNA decay factor CTH1 (325 aa).

2 consecutive C3H1-type zinc fingers follow at residues leucine 204–asparagine 232 and asparagine 242–aspartate 270. The disordered stretch occupies residues serine 284–asparagine 306. Over residues leucine 292–asparagine 306 the composition is skewed to polar residues.

Functionally, binds to specific AU-rich elements (ARE) in the 3'-untranslated region of target mRNAs and promotes their degradation. In response to iron deficiency, promotes the decay of many mRNAs encoding proteins involved in iron-dependent pathways. Negatively regulates primarily iron-dependent mitochondrial processes including respiration and amino acid biosynthesis. This Saccharomyces cerevisiae (strain ATCC 204508 / S288c) (Baker's yeast) protein is mRNA decay factor CTH1 (CTH1).